We begin with the raw amino-acid sequence, 424 residues long: Imidazolonepropionase (424 aa).

Positions 84 and 86 each coordinate Fe(3+). Residues His-84 and His-86 each coordinate Zn(2+). Residues Arg-93, Tyr-156, and His-189 each coordinate 4-imidazolone-5-propanoate. N-formimidoyl-L-glutamate is bound at residue Tyr-156. His-254 is a binding site for Fe(3+). His-254 is a binding site for Zn(2+). Residue Glu-257 coordinates 4-imidazolone-5-propanoate. Residue Asp-328 coordinates Fe(3+). Asp-328 contributes to the Zn(2+) binding site. Asn-330 and Gly-332 together coordinate N-formimidoyl-L-glutamate. Residue Ser-333 coordinates 4-imidazolone-5-propanoate.

This sequence belongs to the metallo-dependent hydrolases superfamily. HutI family. Zn(2+) serves as cofactor. Requires Fe(3+) as cofactor.

The protein resides in the cytoplasm. It carries out the reaction 4-imidazolone-5-propanoate + H2O = N-formimidoyl-L-glutamate. Its pathway is amino-acid degradation; L-histidine degradation into L-glutamate; N-formimidoyl-L-glutamate from L-histidine: step 3/3. Functionally, catalyzes the hydrolytic cleavage of the carbon-nitrogen bond in imidazolone-5-propanoate to yield N-formimidoyl-L-glutamate. It is the third step in the universal histidine degradation pathway. The protein is Imidazolonepropionase of Geobacillus thermodenitrificans (strain NG80-2).